We begin with the raw amino-acid sequence, 238 residues long: Orotidine 5'-phosphate decarboxylase (238 aa).

Substrate contacts are provided by residues Asp-10, Lys-32, Asp-59 to Thr-68, Thr-122, Arg-184, Gln-193, Gly-213, and Arg-214. Residue Lys-61 is the Proton donor of the active site.

Belongs to the OMP decarboxylase family. Type 1 subfamily. As to quaternary structure, homodimer.

The enzyme catalyses orotidine 5'-phosphate + H(+) = UMP + CO2. It functions in the pathway pyrimidine metabolism; UMP biosynthesis via de novo pathway; UMP from orotate: step 2/2. Functionally, catalyzes the decarboxylation of orotidine 5'-monophosphate (OMP) to uridine 5'-monophosphate (UMP). The sequence is that of Orotidine 5'-phosphate decarboxylase from Bacillus cytotoxicus (strain DSM 22905 / CIP 110041 / 391-98 / NVH 391-98).